The sequence spans 614 residues: Protein NRT1/ PTR FAMILY 7.3 (614 aa).

A run of 2 helical transmembrane segments spans residues 41–61 and 87–107; these read WVAG…FFGV and WTGT…SYWG. The residue at position 111 (T111) is a Phosphothreonine. Helical transmembrane passes span 114 to 134, 152 to 172, 196 to 216, 226 to 246, 355 to 375, 390 to 410, 435 to 455, 515 to 535, and 559 to 579; these read IFQV…YMFL, MMEI…YGGY, IAFF…SNTI, WALG…LFLV, PIWL…SLFV, IPPA…IFLY, MGIG…VECY, LCMM…TMVV, and FYFL…ACAK. Positions 592-614 are disordered; the sequence is MQDMSDDDYDTESEEEREKDSKV. The span at 593 to 606 shows a compositional bias: acidic residues; sequence QDMSDDDYDTESEE.

The protein belongs to the major facilitator superfamily. Proton-dependent oligopeptide transporter (POT/PTR) (TC 2.A.17) family. In terms of tissue distribution, high expression in roots. Barely detected in shoots. Expressed in root pericycle cells close to the xylem.

It is found in the cell membrane. Low-affinity proton-dependent bidirectional nitrate transporter. Involved in nitrate loading into xylem and not in nitrate uptake. Not involved in histidine or dipeptides transport. This is Protein NRT1/ PTR FAMILY 7.3 (NPF7.3) from Arabidopsis thaliana (Mouse-ear cress).